Consider the following 344-residue polypeptide: Anthranilate phosphoribosyltransferase (344 aa).

Residues glycine 80, 83–84 (GD), threonine 88, 90–93 (NIST), 108–116 (KHGNRSVSS), and serine 120 contribute to the 5-phospho-alpha-D-ribose 1-diphosphate site. Glycine 80 lines the anthranilate pocket. Serine 92 contributes to the Mg(2+) binding site. Anthranilate is bound at residue asparagine 111. An anthranilate-binding site is contributed by arginine 166. Residues aspartate 225 and glutamate 226 each contribute to the Mg(2+) site.

The protein belongs to the anthranilate phosphoribosyltransferase family. As to quaternary structure, homodimer. Requires Mg(2+) as cofactor.

It carries out the reaction N-(5-phospho-beta-D-ribosyl)anthranilate + diphosphate = 5-phospho-alpha-D-ribose 1-diphosphate + anthranilate. The protein operates within amino-acid biosynthesis; L-tryptophan biosynthesis; L-tryptophan from chorismate: step 2/5. Its function is as follows. Catalyzes the transfer of the phosphoribosyl group of 5-phosphorylribose-1-pyrophosphate (PRPP) to anthranilate to yield N-(5'-phosphoribosyl)-anthranilate (PRA). In Petrotoga mobilis (strain DSM 10674 / SJ95), this protein is Anthranilate phosphoribosyltransferase.